A 145-amino-acid polypeptide reads, in one-letter code: Transcription antitermination protein NusB (145 aa).

The protein belongs to the NusB family.

Functionally, involved in transcription antitermination. Required for transcription of ribosomal RNA (rRNA) genes. Binds specifically to the boxA antiterminator sequence of the ribosomal RNA (rrn) operons. This Acetivibrio thermocellus (strain ATCC 27405 / DSM 1237 / JCM 9322 / NBRC 103400 / NCIMB 10682 / NRRL B-4536 / VPI 7372) (Clostridium thermocellum) protein is Transcription antitermination protein NusB.